We begin with the raw amino-acid sequence, 624 residues long: E3 ubiquitin-protein ligase RLIM (624 aa).

An N-acetylmethionine modification is found at methionine 1. A compositionally biased stretch (basic and acidic residues) spans 1-11; sequence MENSDSNDKGS. 5 disordered regions span residues 1-25, 72-251, 257-276, 291-363, and 424-522; these read MENSDSNDKGSGDQSAAQRRSQMDR, KEGP…SQTF, NETEGSSRTRHHVTLRQQIS, TRNA…RGGF, and SDSE…TFDE. Residues 104 to 132 show a composition bias toward polar residues; the sequence is SVRQTGNTTRSGQRGNQSWRAVSRTNPNS. A compositionally biased stretch (low complexity) spans 142–153; the sequence is NVNRNNGSQNSE. The residue at position 164 (serine 164) is a Phosphoserine. Residues 165-188 are compositionally biased toward polar residues; that stretch reads GENVENNSQRQVENPRSESTSARP. Residues serine 195, serine 228, serine 230, and serine 276 each carry the phosphoserine modification. Positions 214–229 are enriched in basic and acidic residues; it reads RSPDHRRTRARAERSR. Polar residues predominate over residues 291–315; it reads TRNASQGAGSSDTAASGESTGSGQR. Positions 329-339 are enriched in basic and acidic residues; the sequence is RPGEYRQRDSI. A compositionally biased stretch (polar residues) spans 340-356; sequence ASRTRSRSQTPNNTVTY. Gly residues predominate over residues 445–454; that stretch reads GRGGSGGGSS. Residues 455–507 show a composition bias toward low complexity; the sequence is SGSSSSSSSSSSSSSSSSSSSSPSSSSGGESSETSSDLFEGSNEGSSSSGSSG. The RING-type zinc finger occupies 570-611; that stretch reads CSVCITEYTEGNKLRKLPCSHEYHVHCIDRWLSENSTCPICR. The short motif at 621–624 is the PDZ-binding element; that stretch reads ESVV.

It belongs to the RNF12 family. As to quaternary structure, interacts with LIM/homeobox factors such as LHX3. Interacts with LDB1, LDB2 and SIN3A. Interacts with LIMK1. Interacts (via N-terminus) with TERF1. Interacts (via C-terminus) with ESR1. Expressed in many tissues.

It localises to the nucleus. It catalyses the reaction S-ubiquitinyl-[E2 ubiquitin-conjugating enzyme]-L-cysteine + [acceptor protein]-L-lysine = [E2 ubiquitin-conjugating enzyme]-L-cysteine + N(6)-ubiquitinyl-[acceptor protein]-L-lysine.. The protein operates within protein modification; protein ubiquitination. Functionally, E3 ubiquitin-protein ligase. Acts as a negative coregulator for LIM homeodomain transcription factors by mediating the ubiquitination and subsequent degradation of LIM cofactors LDB1 and LDB2 and by mediating the recruitment the SIN3a/histone deacetylase corepressor complex. Ubiquitination and degradation of LIM cofactors LDB1 and LDB2 allows DNA-bound LIM homeodomain transcription factors to interact with other protein partners such as RLIM. Plays a role in telomere length-mediated growth suppression by mediating the ubiquitination and degradation of TERF1. By targeting ZFP42 for degradation, acts as an activator of random inactivation of X chromosome in the embryo, a stochastic process in which one X chromosome is inactivated to minimize sex-related dosage differences of X-encoded genes in somatic cells of female placental mammals. The polypeptide is E3 ubiquitin-protein ligase RLIM (RLIM) (Homo sapiens (Human)).